The following is a 406-amino-acid chain: MQTLANPSKTPINQAVFDTTIHRRKTRSVKVGDITIGGGHPVVVQSMINEDTLDIERSVAAIRRLHEIGCEIVRVTVPSIAHAKSLGEIKQKLAETYKPVPLVADVHHNGMKIALEVAKQVDKVRINPGLYVFEKPQAERNEYTQAEFEEIGDKIRQTLKPLVVSLRDQNKAMRIGVNHGSLSERMLFTYGDTPEGMVESALEFIKICESLKYYNLVISLKASRVPVMLAAYRLMVKRMDELGMPYPLHLGVTEAGDGDYGRVKSTAGIGTLLAEGIGDTIRVSLTEAPEKEIPVCYSILQALGLRKTMVEYVACPSCGRTLFNLENVLHEVREATKHLTGLDIAVMGCIVNGPGEMADADYGYVGKQSGYISLYRGREEIKKVHESQGVEELINLIKADGRWVEP.

4 residues coordinate [4Fe-4S] cluster: Cys315, Cys318, Cys349, and Glu356.

The protein belongs to the IspG family. Requires [4Fe-4S] cluster as cofactor.

It carries out the reaction (2E)-4-hydroxy-3-methylbut-2-enyl diphosphate + 2 oxidized [2Fe-2S]-[ferredoxin] + H2O = 2-C-methyl-D-erythritol 2,4-cyclic diphosphate + 2 reduced [2Fe-2S]-[ferredoxin] + H(+). It functions in the pathway isoprenoid biosynthesis; isopentenyl diphosphate biosynthesis via DXP pathway; isopentenyl diphosphate from 1-deoxy-D-xylulose 5-phosphate: step 5/6. Its function is as follows. Converts 2C-methyl-D-erythritol 2,4-cyclodiphosphate (ME-2,4cPP) into 1-hydroxy-2-methyl-2-(E)-butenyl 4-diphosphate. This is 4-hydroxy-3-methylbut-2-en-1-yl diphosphate synthase (ferredoxin) from Trichodesmium erythraeum (strain IMS101).